Reading from the N-terminus, the 1662-residue chain is Cortactin-binding protein 2 (1662 aa).

5 disordered regions span residues 1-23, 203-222, 361-440, 454-479, and 498-618; these read MATDGASCEPDLSRAPEDAAGAA, KKKTNELEEELSAEKRRSTE, SHSD…LHPG, GNANDPDQNGNTTQSPPSRDMSPTSR, and RFTS…PSID. A coiled-coil region spans residues 119 to 276; the sequence is KKMQERMSAQ…EQLKRGSDSK (158 aa). Over residues 386 to 396 the composition is skewed to low complexity; the sequence is PSTDSTPDPTS. A compositionally biased stretch (polar residues) spans 411–422; sequence QTPGIAPQNSQA. Position 498 is an asymmetric dimethylarginine (arginine 498). The span at 583 to 597 shows a compositional bias: polar residues; sequence TVASPPSSLPQGNRV. ANK repeat units lie at residues 709–739, 743–772, 776–805, 809–838, 842–871, and 912–942; these read GRPTLLQQAAAQGNVTLLSMLLNEEGLDINY, DGHSALYSAAKNGHTDCVRLLLSAEAQINA, NGFTPLCAAAAQGHFECVELLIAYDANINH, GGQTPLYLACKNENKECIKLLLEAGTNRSV, DGWTPVHAAVDTGNVDSLKLLMYHRIPACG, and EGWTAAHIAASKGFKNCLEILCRHGGLEPER. Residues 1450 to 1474 are disordered; the sequence is GESGAWRKVNTSPRRKSGRFSLPTW. Position 1524 is a phosphoserine (serine 1524). 2 disordered regions span residues 1580–1602 and 1618–1662; these read SQKEVSPLSSHQTTECSNSKSKT and SKVT…KPNK. Residues 1582-1599 show a composition bias toward polar residues; that stretch reads KEVSPLSSHQTTECSNSK. The span at 1624–1638 shows a compositional bias: low complexity; it reads SQNTKRSSSSSNTRQ. Polar residues predominate over residues 1639-1648; sequence IEINNNSKEN. Residues 1649–1662 are compositionally biased toward basic and acidic residues; that stretch reads WNLHKNEHLDKPNK.

As to quaternary structure, interacts with CTTN/cortactin SH3 domain. Interacts with STRN, STRN4/zinedin and MOB4/phocein; this interactions mediate the association with the STRIPAK core complex and may regulate dendritic spine distribution of the STRIPAK complex in hippocampal neurons. Activation of glutamate receptors weakens the interaction with STRN and STRN4.

It localises to the cytoplasm. Its subcellular location is the cell cortex. It is found in the cell projection. The protein resides in the dendritic spine. In terms of biological role, regulates the dendritic spine distribution of CTTN/cortactin in hippocampal neurons, and thus controls dendritic spinogenesis and dendritic spine maintenance. Associates with the striatin-interacting phosphatase and kinase (STRIPAK) core complex to regulate dendritic spine distribution of the STRIPAK complex in hippocampal neurons. The chain is Cortactin-binding protein 2 (CTTNBP2) from Chlorocebus aethiops (Green monkey).